The sequence spans 1400 residues: Macrophage-stimulating protein receptor (1400 aa).

An N-terminal signal peptide occupies residues 1–24 (MELLPPLPQSFLLLLLLPAKPAAG). Over 25–957 (EDWQCPRTPY…PGPDGVPQST (933 aa)) the chain is Extracellular. Residues 31–522 (RTPYAASRDF…SGDQVFQVPI (492 aa)) enclose the Sema domain. N-linked (GlcNAc...) asparagine glycosylation is present at Asn66. Disulfide bonds link Cys101–Cys104, Cys107–Cys162, Cys135–Cys143, Cys174–Cys177, Cys300–Cys367, Cys385–Cys407, and Cys386–Cys422. N-linked (GlcNAc...) asparagine glycans are attached at residues Asn419, Asn458, and Asn488. Intrachain disulfides connect Cys527/Cys545, Cys533/Cys567, Cys536/Cys552, and Cys548/Cys558. IPT/TIG domains lie at 569–671 (PKLT…FRVD), 684–767 (PVLI…FQYR), and 770–860 (PVVL…FRFL). N-linked (GlcNAc...) asparagine glycosylation is found at Asn654, Asn720, Asn841, and Asn897. The helical transmembrane segment at 958-978 (LLGILLPLLLLVAALATALVF) threads the bilayer. Over 979–1400 (SYWWRRKQLV…RPLSEPPRPT (422 aa)) the chain is Cytoplasmic. One can recognise a Protein kinase domain in the interval 1082–1345 (THSDRVIGKG…VLVGEVEQIV (264 aa)). ATP-binding positions include 1088–1096 (IGKGHFGVV), Lys1114, and 1161–1164 (LPYM). Asp1208 functions as the Proton acceptor in the catalytic mechanism. Arg1212 contacts ATP. Residues Tyr1238, Tyr1239, Tyr1353, and Tyr1360 each carry the phosphotyrosine; by autocatalysis modification. Residues 1367–1400 (TSHEMNVRPEQPQFSPMPGNVRRPRPLSEPPRPT) form a disordered region.

This sequence belongs to the protein kinase superfamily. Tyr protein kinase family. As to quaternary structure, heterodimer of an alpha chain and a beta chain which are disulfide linked. Binds PLXNB1. Associates with and is negatively regulated by HYAL2. Interacts when phosphorylated with downstream effectors including PIK3R1, PCLG1, GRB2 and GAB1. Interacts with integrin beta1/ITGB1 in a ligand-independent fashion. Proteolytic processing yields the two subunits. Post-translationally, autophosphorylated in response to ligand binding on Tyr-1238 and Tyr-1239 in the kinase domain leading to further phosphorylation of Tyr-1353 and Tyr-1360 in the C-terminal multifunctional docking site. In terms of processing, ubiquitinated. Ubiquitination by CBL regulates the receptor stability and activity through proteasomal degradation. O-mannosylation of IPT/TIG domains on Thr or Ser residues by TMEM260 is required for protein maturation. O-mannosylated residues are composed of single mannose glycans that are not elongated or modified. In terms of tissue distribution, expressed in colon, skin, lung and bone marrow.

The protein localises to the membrane. The catalysed reaction is L-tyrosyl-[protein] + ATP = O-phospho-L-tyrosyl-[protein] + ADP + H(+). In its inactive state, the C-terminal tail interacts with the catalytic domain and inhibits the kinase activity. Upon ligand binding, the C-terminal tail is displaced and becomes phosphorylated, thus increasing the kinase activity. Functionally, receptor tyrosine kinase that transduces signals from the extracellular matrix into the cytoplasm by binding to MST1 ligand. Regulates many physiological processes including cell survival, migration and differentiation. Ligand binding at the cell surface induces autophosphorylation of RON on its intracellular domain that provides docking sites for downstream signaling molecules. Following activation by ligand, interacts with the PI3-kinase subunit PIK3R1, PLCG1 or the adapter GAB1. Recruitment of these downstream effectors by RON leads to the activation of several signaling cascades including the RAS-ERK, PI3 kinase-AKT, or PLCgamma-PKC. RON signaling activates the wound healing response by promoting epithelial cell migration, proliferation as well as survival at the wound site. Also plays a role in the innate immune response by regulating the migration and phagocytic activity of macrophages. Alternatively, RON can also promote signals such as cell migration and proliferation in response to growth factors other than MST1 ligand. This is Macrophage-stimulating protein receptor (MST1R) from Homo sapiens (Human).